The sequence spans 475 residues: tRNA modification GTPase MnmE (475 aa).

Positions 24, 81, and 124 each coordinate (6S)-5-formyl-5,6,7,8-tetrahydrofolate. The TrmE-type G domain maps to 220-397 (GLSVVLAGQP…LRRELLRLVG (178 aa)). Residue Asn-230 coordinates K(+). GTP-binding positions include 230-235 (NVGKSS), 249-255 (TPIAGTT), 274-277 (DTAG), and 378-380 (SAR). Ser-234 serves as a coordination point for Mg(2+). K(+) is bound by residues Thr-249, Ile-251, and Thr-254. Thr-255 contributes to the Mg(2+) binding site. Residue Lys-475 coordinates (6S)-5-formyl-5,6,7,8-tetrahydrofolate.

The protein belongs to the TRAFAC class TrmE-Era-EngA-EngB-Septin-like GTPase superfamily. TrmE GTPase family. Homodimer. Heterotetramer of two MnmE and two MnmG subunits. It depends on K(+) as a cofactor.

Its subcellular location is the cytoplasm. Its function is as follows. Exhibits a very high intrinsic GTPase hydrolysis rate. Involved in the addition of a carboxymethylaminomethyl (cmnm) group at the wobble position (U34) of certain tRNAs, forming tRNA-cmnm(5)s(2)U34. In Cupriavidus necator (strain ATCC 17699 / DSM 428 / KCTC 22496 / NCIMB 10442 / H16 / Stanier 337) (Ralstonia eutropha), this protein is tRNA modification GTPase MnmE.